We begin with the raw amino-acid sequence, 83 residues long: Phytosulfokines 4 (83 aa).

The first 28 residues, 1-28, serve as a signal peptide directing secretion; it reads MAARTVAVAAALAVLLIFAASSATVAMA. A propeptide spanning residues 29-74 is cleaved from the precursor; that stretch reads GRPTPTTSLDEEAAQAAAQSEIGGGCKEGEGEEECLARRTLTAHTD. Tyr75 and Tyr77 each carry sulfotyrosine. A propeptide spanning residues 80–83 is cleaved from the precursor; it reads QHHN.

Belongs to the phytosulfokine family. In terms of processing, sulfation is important for activity and for the binding to a putative membrane receptor. Post-translationally, PSK-alpha is produced by endopeptidase digestion. PSK-beta is produced from PSK-alpha by exopeptidase digestion.

Its subcellular location is the secreted. In terms of biological role, promotes plant cell differentiation, organogenesis and somatic embryogenesis as well as cell proliferation. In Oryza sativa subsp. japonica (Rice), this protein is Phytosulfokines 4 (PSK4).